The chain runs to 94 residues: Co-chaperonin GroES (94 aa).

It belongs to the GroES chaperonin family. As to quaternary structure, heptamer of 7 subunits arranged in a ring. Interacts with the chaperonin GroEL.

The protein resides in the cytoplasm. Functionally, together with the chaperonin GroEL, plays an essential role in assisting protein folding. The GroEL-GroES system forms a nano-cage that allows encapsulation of the non-native substrate proteins and provides a physical environment optimized to promote and accelerate protein folding. GroES binds to the apical surface of the GroEL ring, thereby capping the opening of the GroEL channel. The sequence is that of Co-chaperonin GroES from Lactococcus lactis subsp. lactis (strain IL1403) (Streptococcus lactis).